The sequence spans 166 residues: NAD(P)H-quinone oxidoreductase subunit I, chloroplastic (166 aa).

4Fe-4S ferredoxin-type domains lie at 55 to 84 (GRIHFEFDKCIACEVCVRVCPIDLPVVDWK) and 95 to 124 (LNYSIDFGICIFCGNCVEYCPTNCLSMTEE). Residues Cys64, Cys67, Cys70, Cys74, Cys104, Cys107, Cys110, and Cys114 each coordinate [4Fe-4S] cluster.

This sequence belongs to the complex I 23 kDa subunit family. NDH is composed of at least 16 different subunits, 5 of which are encoded in the nucleus. The cofactor is [4Fe-4S] cluster.

It is found in the plastid. It localises to the chloroplast thylakoid membrane. The enzyme catalyses a plastoquinone + NADH + (n+1) H(+)(in) = a plastoquinol + NAD(+) + n H(+)(out). It carries out the reaction a plastoquinone + NADPH + (n+1) H(+)(in) = a plastoquinol + NADP(+) + n H(+)(out). In terms of biological role, NDH shuttles electrons from NAD(P)H:plastoquinone, via FMN and iron-sulfur (Fe-S) centers, to quinones in the photosynthetic chain and possibly in a chloroplast respiratory chain. The immediate electron acceptor for the enzyme in this species is believed to be plastoquinone. Couples the redox reaction to proton translocation, and thus conserves the redox energy in a proton gradient. The polypeptide is NAD(P)H-quinone oxidoreductase subunit I, chloroplastic (Hofmeisteria fasciculata (Helogyne fasciculata)).